The primary structure comprises 37 residues: uncharacterized protein (37 aa).

A helical membrane pass occupies residues 17 to 37 (TFVLIVVLFILLIIVGAAFIC).

Belongs to the SscA family.

It localises to the membrane. This is an uncharacterized protein from Bacillus subtilis (strain 168).